Reading from the N-terminus, the 293-residue chain is Bifunctional protein FolD (293 aa).

NADP(+)-binding positions include G165–S167, S190, and I231.

The protein belongs to the tetrahydrofolate dehydrogenase/cyclohydrolase family. Homodimer.

The catalysed reaction is (6R)-5,10-methylene-5,6,7,8-tetrahydrofolate + NADP(+) = (6R)-5,10-methenyltetrahydrofolate + NADPH. The enzyme catalyses (6R)-5,10-methenyltetrahydrofolate + H2O = (6R)-10-formyltetrahydrofolate + H(+). The protein operates within one-carbon metabolism; tetrahydrofolate interconversion. Functionally, catalyzes the oxidation of 5,10-methylenetetrahydrofolate to 5,10-methenyltetrahydrofolate and then the hydrolysis of 5,10-methenyltetrahydrofolate to 10-formyltetrahydrofolate. This Synechococcus sp. (strain CC9311) protein is Bifunctional protein FolD.